Here is a 207-residue protein sequence, read N- to C-terminus: Outer-membrane lipoprotein LolB (207 aa).

A signal peptide spans 1 to 21; it reads MPTKTVRCLRLLPLASLLLAA. Residue cysteine 22 is the site of N-palmitoyl cysteine attachment. The S-diacylglycerol cysteine moiety is linked to residue cysteine 22.

This sequence belongs to the LolB family. Monomer.

The protein localises to the cell outer membrane. Functionally, plays a critical role in the incorporation of lipoproteins in the outer membrane after they are released by the LolA protein. This is Outer-membrane lipoprotein LolB from Pectobacterium atrosepticum (strain SCRI 1043 / ATCC BAA-672) (Erwinia carotovora subsp. atroseptica).